Here is a 152-residue protein sequence, read N- to C-terminus: Large ribosomal subunit protein bL9 (152 aa).

Belongs to the bacterial ribosomal protein bL9 family.

Its function is as follows. Binds to the 23S rRNA. This Coxiella burnetii (strain Dugway 5J108-111) protein is Large ribosomal subunit protein bL9.